The sequence spans 1895 residues: Probable WRKY transcription factor 19 (1895 aa).

The interval 1–85 is disordered; that stretch reads MSEKEELPLT…SGSGLSQQLN (85 aa). The segment covering 10–22 has biased composition (polar residues); that stretch reads TLTSIGAATATSD. Residues 28–39 show a composition bias toward low complexity; sequence GSSGEGISSSSS. Polar residues predominate over residues 46–62; sequence MQNSPTGLMISQSSSMC. Residues 75 to 85 show a composition bias toward low complexity; sequence SSGSGLSQQLN. Residues 291–371 form the PAH domain; that stretch reads RPLTIDGGGN…LGFNTYLSKE (81 aa). The segment covering 408-417 has biased composition (polar residues); the sequence is ANMQPQTEYP. 3 disordered regions span residues 408 to 442, 517 to 538, and 580 to 620; these read ANMQ…SSLL, YKDR…TYLS, and EASD…ADAS. Low complexity predominate over residues 418–427; sequence SSSAVQSFSS. Residues 428–442 show a composition bias toward polar residues; the sequence is GQPQIPTSAPDSSLL. Residues 462–526 constitute a DNA-binding region (WRKY 1); sequence NVDKQVNDGY…YKDRHNHEPP (65 aa). A DNA-binding region (WRKY 2) is located at residues 635 to 700; the sequence is SEVDNLDDGY…SLCRRGISVY (66 aa). The region spanning 666–808 is the TIR domain; sequence KDYDVVIRYG…EIVRDALKVL (143 aa). An NB-ARC domain is found at 800–1087; sequence IVRDALKVLC…LDGCGFSAHV (288 aa). An ATP-binding site is contributed by 844-851; that stretch reads GTVGIGKT. LRR repeat units lie at residues 1206–1227, 1228–1249, 1259–1281, 1282–1304, 1306–1328, 1329–1351, 1352–1371, 1373–1395, 1397–1419, and 1421–1442; these read KLRL…FNPE, NLVE…KKAR, KLKK…SSAT, NLEH…ISYL, KLVF…VDLE, SLEV…SPNV, KELY…IKNL, LLEK…IYKL, HLET…SRRM, and CLRF…ISYL. A disordered region spans residues 1562–1583; that stretch reads ETVAPPSSSSEAREEEVETEET. The region spanning 1626–1877 is the Protein kinase domain; that stretch reads WQKGQLLGRG…AAELLNHPFV (252 aa). ATP is bound by residues 1632-1640 and K1654; that span reads LGRGSLGSV. D1758 is an active-site residue.

The protein belongs to the disease resistance X-TIR-NB-LRR-X family.

It localises to the nucleus. In terms of biological role, transcription factor. Interacts specifically with the W box (5'-(T)TGAC[CT]-3'), a frequently occurring elicitor-responsive cis-acting element. May act also as a disease resistance protein with a serine/threonine-protein kinase activity. In Arabidopsis thaliana (Mouse-ear cress), this protein is Probable WRKY transcription factor 19 (WRKY19).